A 66-amino-acid polypeptide reads, in one-letter code: Photosystem II reaction center protein J (66 aa).

The tract at residues 1–23 is disordered; that stretch reads MSGNKSPFPDGRIPDRLPDGRPA. A helical membrane pass occupies residues 37-57; the sequence is LWLVATAGGMAVLFVVGLFFY.

The protein belongs to the PsbJ family. As to quaternary structure, PSII is composed of 1 copy each of membrane proteins PsbA, PsbB, PsbC, PsbD, PsbE, PsbF, PsbH, PsbI, PsbJ, PsbK, PsbL, PsbM, PsbT, PsbX, PsbY, PsbZ, Psb30/Ycf12, peripheral proteins PsbO, CyanoQ (PsbQ), PsbU, PsbV and a large number of cofactors. It forms dimeric complexes.

It localises to the cellular thylakoid membrane. In terms of biological role, one of the components of the core complex of photosystem II (PSII). PSII is a light-driven water:plastoquinone oxidoreductase that uses light energy to abstract electrons from H(2)O, generating O(2) and a proton gradient subsequently used for ATP formation. It consists of a core antenna complex that captures photons, and an electron transfer chain that converts photonic excitation into a charge separation. In Parasynechococcus marenigrum (strain WH8102), this protein is Photosystem II reaction center protein J.